Reading from the N-terminus, the 548-residue chain is CTP synthase (548 aa).

The amidoligase domain stretch occupies residues 1 to 276 (MPTELTDYDP…DQYVMEQLGL (276 aa)). Ser-25 lines the CTP pocket. Residue Ser-25 participates in UTP binding. Position 26–31 (26–31 (GLGKGI)) interacts with ATP. Position 66 (Tyr-66) interacts with L-glutamine. Residue Asp-83 participates in ATP binding. The Mg(2+) site is built by Asp-83 and Glu-151. CTP is bound by residues 158-160 (DIE), 197-202 (KTKPTQ), and Lys-233. UTP contacts are provided by residues 197–202 (KTKPTQ) and Lys-233. One can recognise a Glutamine amidotransferase type-1 domain in the interval 303–541 (DIALVGKYAM…VETILETTDT (239 aa)). Gly-363 serves as a coordination point for L-glutamine. The Nucleophile; for glutamine hydrolysis role is filled by Cys-390. L-glutamine contacts are provided by residues 391 to 394 (LGFQ), Glu-414, and Arg-471. Residues His-514 and Glu-516 contribute to the active site.

This sequence belongs to the CTP synthase family. Homotetramer.

The enzyme catalyses UTP + L-glutamine + ATP + H2O = CTP + L-glutamate + ADP + phosphate + 2 H(+). It carries out the reaction L-glutamine + H2O = L-glutamate + NH4(+). It catalyses the reaction UTP + NH4(+) + ATP = CTP + ADP + phosphate + 2 H(+). The protein operates within pyrimidine metabolism; CTP biosynthesis via de novo pathway; CTP from UDP: step 2/2. With respect to regulation, allosterically activated by GTP, when glutamine is the substrate; GTP has no effect on the reaction when ammonia is the substrate. The allosteric effector GTP functions by stabilizing the protein conformation that binds the tetrahedral intermediate(s) formed during glutamine hydrolysis. Inhibited by the product CTP, via allosteric rather than competitive inhibition. In terms of biological role, catalyzes the ATP-dependent amination of UTP to CTP with either L-glutamine or ammonia as the source of nitrogen. Regulates intracellular CTP levels through interactions with the four ribonucleotide triphosphates. This chain is CTP synthase, found in Natronomonas pharaonis (strain ATCC 35678 / DSM 2160 / CIP 103997 / JCM 8858 / NBRC 14720 / NCIMB 2260 / Gabara) (Halobacterium pharaonis).